The following is a 592-amino-acid chain: Transcription factor MYC3 (592 aa).

The tract at residues 82-141 (STGDNTVILGWGDGYYKGEEDKEKKKNNTNTAEQEHRKRVIRELNSLISGGIGVSDESND) is JAZ-interaction domain. Disordered regions lie at residues 261–313 (ENDP…VENQ), 341–361 (CGNE…NDEG), 393–422 (EPPE…AERQ), and 465–508 (QQAE…STAS). The segment covering 278–293 (SPARVNNGNNSNSNSK) has biased composition (low complexity). Positions 294–306 (SDSHQISKLEKND) are enriched in basic and acidic residues. The span at 352 to 361 (VSKGSNNDEG) shows a compositional bias: polar residues. Basic residues predominate over residues 398 to 407 (KPRKRGRKPA). 2 stretches are compositionally biased toward basic and acidic residues: residues 408 to 422 (NGRE…AERQ) and 468 to 482 (ESDK…DGMS). One can recognise a bHLH domain in the interval 411-460 (EEPLNHVEAERQRREKLNQRFYSLRAVVPNVSKMDKASLLGDAISYINEL).

In terms of assembly, homo- and heterodimer. Interacts with MYB28, MYB29, MYB34, MYB51, MYB76, MYB122, MYC2, MYC4, AFPH2/NINJA and the JAZ repressors TIFY10A/JAZ1, TIFY10B/JAZ2, TIFY6B/JAZ3, TIFY11A/JAZ5, TIFY11B/JAZ6, TIFY5B/JAZ7, TIFY5A/JAZ8, TIFY7/JAZ9, TIFY9/JAZ10, TIFY3A/JAZ11 and TIFY3B/JAZ12. Constitutively expressed in roots, stems, leaves, flowers, and seedlings.

The protein resides in the nucleus. Transcription factor involved in tryptophan, jasmonic acid (JA) and other stress-responsive gene regulation. With MYC2 and MYC4, controls additively subsets of JA-dependent responses. Can form complexes with all known glucosinolate-related MYBs to regulate glucosinolate biosynthesis. Binds to the G-box (5'-CACGTG-3') of promoters. Activates multiple TIFY/JAZ promoters. This Arabidopsis thaliana (Mouse-ear cress) protein is Transcription factor MYC3 (MYC3).